The sequence spans 565 residues: Periplasmic trehalase (565 aa).

Positions 1–30 (MKSPAPSRPQKMALIPACIFLCFAALSVQA) are cleaved as a signal peptide. Residues R152, 159–160 (WD), N196, 205–207 (RSQ), 277–279 (RPE), and G310 contribute to the substrate site. Catalysis depends on proton donor/acceptor residues D312 and E496. E511 serves as a coordination point for substrate. Positions 539–565 (CDNVPATRPLSESTTQPVKQKEAEPTP) are disordered.

It belongs to the glycosyl hydrolase 37 family. As to quaternary structure, monomer.

The protein resides in the periplasm. It carries out the reaction alpha,alpha-trehalose + H2O = alpha-D-glucose + beta-D-glucose. Provides the cells with the ability to utilize trehalose at high osmolarity by splitting it into glucose molecules that can subsequently be taken up by the phosphotransferase-mediated uptake system. The polypeptide is Periplasmic trehalase (Escherichia coli O17:K52:H18 (strain UMN026 / ExPEC)).